The sequence spans 529 residues: Autoinducer-2 kinase (529 aa).

This sequence belongs to the FGGY kinase family.

It localises to the cytoplasm. The enzyme catalyses (S)-4,5-dihydroxypentane-2,3-dione + ATP = (2S)-2-hydroxy-3,4-dioxopentyl phosphate + ADP + H(+). In terms of biological role, catalyzes the phosphorylation of autoinducer-2 (AI-2) to phospho-AI-2, which subsequently inactivates the transcriptional regulator LsrR and leads to the transcription of the lsr operon. Phosphorylates the ring-open form of (S)-4,5-dihydroxypentane-2,3-dione (DPD), which is the precursor to all AI-2 signaling molecules, at the C5 position. The protein is Autoinducer-2 kinase of Yersinia enterocolitica serotype O:8 / biotype 1B (strain NCTC 13174 / 8081).